The primary structure comprises 862 residues: MAQPGPAPQPDVSLQQRVAELEKINAEFLRAQQQLEQEFNQKRAKFKELYLAKEEDLKRQNAVLQAAQDDLGHLRTQLWEAQAEMENIKAIATVSENTKQEAIDEVKRQWREEVASLQAVMKETVRDYEHQFHLRLEQERAQWAQYRESADREIADLRRRLSEGQEEENLENEMKKAQEDAEKLRSVVMPMEKEIAALKDKLTEAEDKIKELEASKVKELNHYLEAEKSCRTDLEMYVAVLNTQKSVLQEDAEKLRKELHEVCHLLEQERQQHNQLKHTWQKANDQFLESQRLLMRDMQRMEIVLTSEQLRQVEELKKKDQEEDEQQRINKGKDNKKIDTEEEVKIPVVCALTQEESSTPLSNEEEHLDSTHGSVHSLDADLLLPSGDPFSKSDNDMFKEGLRRAQSTDSLGTSSSLQSKALGYNYKAKSAGNLDESDFGPLVGADSVSENFDTVSLGSLQMPSGFMLTKDQERAIKAMTPEQEETASLLSSVTQGMESAYVSPSGYRLVSETEWNLLQKEVHNAGNKLGRRCDMCSNYEKQLQGIQIQEAETRDQVKKLQLMLRQANDQLEKTMKEKQELEDFLRQSAEDSSHQISALVLRAQASEVLLEELQQSFSQAKRDVQEQMAVLMQSREQVSEELVRLQKDNDSLQGKHSLHVSLQLAEDFILPDTVQVLRELVLKYRENIVHVRTAADHMEEKLKAEILFLKEQIQAEQCLKENLEETLQLEIENCKEEIASISSLKAELERIKVEKGQLESTLREKSQQLESLQEIKVNLEEQLKKETAAKATVEQLMFEEKNKAQRLQTELDVSEQVQRDFVKLSQTLQVQLERIRQADSLERIRAILNDTKLTDINQLPET.

At Ala2 the chain carries N-acetylalanine. The stretch at 11–328 forms a coiled coil; that stretch reads DVSLQQRVAE…KDQEEDEQQR (318 aa). Lys282 is modified (N6-acetyllysine). Disordered stretches follow at residues 315-340 and 355-374; these read ELKK…KIDT and EESS…THGS. Residues Ser374, Ser377, and Ser407 each carry the phosphoserine modification. A Phosphothreonine modification is found at Thr408. Phosphoserine is present on Ser410. The stretch at 534-816 forms a coiled coil; that stretch reads DMCSNYEKQL…LQTELDVSEQ (283 aa).

Belongs to the rabaptin family. As to quaternary structure, heterodimer with RABGEF1. The heterodimer binds RAB4A and RAB5A that have been activated by GTP-binding. Interacts with TSC2. Interacts with GGA1 (via GAE domain), GGA2 (via GAE domain) and GGA3 (via GAE domain). Interacts with AP1G1 (via GAE domain). Interacts with AP1G2 (via GAE domain). Interacts with ECPAS. Interacts with KCNH1. Interacts with PKD1 (via C-terminal domain) and GGA1; the interactions recruit PKD1:PKD2 complex to GGA1 and ARL3 at trans-Golgi network. Interacts with KCNH1. Proteolytic cleavage by caspases in apoptotic cells causes loss of endosome fusion activity.

The protein localises to the cytoplasm. It localises to the early endosome. The protein resides in the recycling endosome. It is found in the cytoplasmic vesicle. Functionally, rab effector protein acting as linker between gamma-adaptin, RAB4A and RAB5A. Involved in endocytic membrane fusion and membrane trafficking of recycling endosomes. Involved in KCNH1 channels trafficking to and from the cell membrane. Stimulates RABGEF1 mediated nucleotide exchange on RAB5A. Mediates the traffic of PKD1:PKD2 complex from the endoplasmic reticulum through the Golgi to the cilium. The protein is Rab GTPase-binding effector protein 1 (Rabep1) of Rattus norvegicus (Rat).